The primary structure comprises 139 residues: Putative nickel-responsive regulator (139 aa).

Ni(2+) contacts are provided by His76, His87, His89, and Cys95.

This sequence belongs to the transcriptional regulatory CopG/NikR family. Ni(2+) is required as a cofactor.

Functionally, transcriptional regulator. The polypeptide is Putative nickel-responsive regulator (Rhodopseudomonas palustris (strain HaA2)).